Here is a 135-residue protein sequence, read N- to C-terminus: Thyrostimulin beta-5 subunit (135 aa).

Residues 1–19 (MVMPLVLSLALTPPPLCHA) form the signal peptide. Disulfide bonds link cysteine 30–cysteine 87, cysteine 54–cysteine 102, cysteine 63–cysteine 118, cysteine 67–cysteine 120, and cysteine 123–cysteine 130.

The protein belongs to the glycoprotein hormones subunit beta family. Heterodimer with GPHA2; non-covalently-linked. In terms of tissue distribution, expressed by the venom duct.

The protein resides in the secreted. This is Thyrostimulin beta-5 subunit from Conus victoriae (Queen Victoria cone).